Consider the following 426-residue polypeptide: 3-phosphoshikimate 1-carboxyvinyltransferase (426 aa).

Residues Lys23, Ser24, and Arg28 each contribute to the 3-phosphoshikimate site. Lys23 provides a ligand contact to phosphoenolpyruvate. Positions 96 and 124 each coordinate phosphoenolpyruvate. The 3-phosphoshikimate site is built by Thr170, Ser171, Gln172, Ser198, Asp314, and Lys341. Residue Gln172 participates in phosphoenolpyruvate binding. Asp314 serves as the catalytic Proton acceptor. Phosphoenolpyruvate contacts are provided by Arg345, Arg386, and Lys411.

It belongs to the EPSP synthase family. As to quaternary structure, monomer.

It localises to the cytoplasm. It carries out the reaction 3-phosphoshikimate + phosphoenolpyruvate = 5-O-(1-carboxyvinyl)-3-phosphoshikimate + phosphate. It participates in metabolic intermediate biosynthesis; chorismate biosynthesis; chorismate from D-erythrose 4-phosphate and phosphoenolpyruvate: step 6/7. Catalyzes the transfer of the enolpyruvyl moiety of phosphoenolpyruvate (PEP) to the 5-hydroxyl of shikimate-3-phosphate (S3P) to produce enolpyruvyl shikimate-3-phosphate and inorganic phosphate. This chain is 3-phosphoshikimate 1-carboxyvinyltransferase, found in Nostoc punctiforme (strain ATCC 29133 / PCC 73102).